The sequence spans 266 residues: Vitamin B12-binding protein (266 aa).

Positions 1–22 are cleaved as a signal peptide; the sequence is MVKQMFRALVALLLTLPVWLYA. The Fe/B12 periplasmic-binding domain maps to 25–266; sequence RVITLSPANT…QLCNALSQVN (242 aa). Residues Y50 and 242–246 contribute to the cyanocob(III)alamin site; that span reads DWFER. Cysteines 183 and 259 form a disulfide.

This sequence belongs to the BtuF family. As to quaternary structure, the complex is composed of two ATP-binding proteins (BtuD), two transmembrane proteins (BtuC) and a solute-binding protein (BtuF).

It localises to the periplasm. In terms of biological role, part of the ABC transporter complex BtuCDF involved in vitamin B12 import. Binds vitamin B12 and delivers it to the periplasmic surface of BtuC. The polypeptide is Vitamin B12-binding protein (Salmonella choleraesuis (strain SC-B67)).